The sequence spans 295 residues: Protoheme IX farnesyltransferase (295 aa).

Transmembrane regions (helical) follow at residues 27–46, 50–72, 93–115, 119–136, 148–168, 175–195, 219–239, 244–264, and 275–295; these read IMYL…PGSI, IAII…NMWY, ISKS…VMMI, YISG…SFAY, IVIG…SVTS, LILF…LSLL, VHIL…GLFL, LYEI…FKVF, and MFTY…LASF.

This sequence belongs to the UbiA prenyltransferase family. Protoheme IX farnesyltransferase subfamily.

It localises to the cell inner membrane. It catalyses the reaction heme b + (2E,6E)-farnesyl diphosphate + H2O = Fe(II)-heme o + diphosphate. The protein operates within porphyrin-containing compound metabolism; heme O biosynthesis; heme O from protoheme: step 1/1. Converts heme B (protoheme IX) to heme O by substitution of the vinyl group on carbon 2 of heme B porphyrin ring with a hydroxyethyl farnesyl side group. This Ehrlichia canis (strain Jake) protein is Protoheme IX farnesyltransferase.